A 229-amino-acid polypeptide reads, in one-letter code: Heptaprenylglyceryl phosphate synthase (229 aa).

A sn-glycerol 1-phosphate-binding site is contributed by K12. Mg(2+)-binding residues include D14 and T40. Sn-glycerol 1-phosphate contacts are provided by residues 159-164, G189, and 209-210; these read YIEYSG and GN.

It belongs to the GGGP/HepGP synthase family. Group I subfamily. Homodimer. It depends on Mg(2+) as a cofactor.

It carries out the reaction sn-glycerol 1-phosphate + all-trans-heptaprenyl diphosphate = 3-heptaprenyl-sn-glycero-1-phosphate + diphosphate. Its pathway is membrane lipid metabolism; glycerophospholipid metabolism. Functionally, prenyltransferase that catalyzes in vivo the transfer of the heptaprenyl moiety of heptaprenyl pyrophosphate (HepPP; 35 carbon atoms) to the C3 hydroxyl of sn-glycerol-1-phosphate (G1P), producing heptaprenylglyceryl phosphate (HepGP). This reaction is an ether-bond-formation step in the biosynthesis of archaea-type G1P-based membrane lipids found in Bacillales. The chain is Heptaprenylglyceryl phosphate synthase from Staphylococcus saprophyticus subsp. saprophyticus (strain ATCC 15305 / DSM 20229 / NCIMB 8711 / NCTC 7292 / S-41).